We begin with the raw amino-acid sequence, 243 residues long: Ribosomal RNA small subunit methyltransferase G (243 aa).

Residues glycine 82, phenylalanine 87, 133–134 (AE), and arginine 152 contribute to the S-adenosyl-L-methionine site.

Belongs to the methyltransferase superfamily. RNA methyltransferase RsmG family.

Its subcellular location is the cytoplasm. Functionally, specifically methylates the N7 position of a guanine in 16S rRNA. In Clostridium novyi (strain NT), this protein is Ribosomal RNA small subunit methyltransferase G.